We begin with the raw amino-acid sequence, 145 residues long: Beta sliding clamp (145 aa).

It belongs to the beta sliding clamp family. As to quaternary structure, forms a ring-shaped head-to-tail homodimer around DNA which binds and tethers DNA polymerases and other proteins to the DNA. The DNA replisome complex has a single clamp-loading complex (3 tau and 1 each of delta, delta', psi and chi subunits) which binds 3 Pol III cores (1 core on the leading strand and 2 on the lagging strand) each with a beta sliding clamp dimer. Additional proteins in the replisome are other copies of gamma, psi and chi, Ssb, DNA helicase and RNA primase.

The protein localises to the cytoplasm. Confers DNA tethering and processivity to DNA polymerases and other proteins. Acts as a clamp, forming a ring around DNA (a reaction catalyzed by the clamp-loading complex) which diffuses in an ATP-independent manner freely and bidirectionally along dsDNA. Initially characterized for its ability to contact the catalytic subunit of DNA polymerase III (Pol III), a complex, multichain enzyme responsible for most of the replicative synthesis in bacteria; Pol III exhibits 3'-5' exonuclease proofreading activity. The beta chain is required for initiation of replication as well as for processivity of DNA replication. The sequence is that of Beta sliding clamp (dnaN) from Vibrio harveyi (Beneckea harveyi).